A 316-amino-acid chain; its full sequence is 4-hydroxy-3-methylbut-2-enyl diphosphate reductase (316 aa).

Cysteine 12 is a [4Fe-4S] cluster binding site. Positions 41 and 74 each coordinate (2E)-4-hydroxy-3-methylbut-2-enyl diphosphate. Positions 41 and 74 each coordinate dimethylallyl diphosphate. 2 residues coordinate isopentenyl diphosphate: histidine 41 and histidine 74. Cysteine 96 contacts [4Fe-4S] cluster. Residue histidine 124 participates in (2E)-4-hydroxy-3-methylbut-2-enyl diphosphate binding. Histidine 124 serves as a coordination point for dimethylallyl diphosphate. Histidine 124 serves as a coordination point for isopentenyl diphosphate. The active-site Proton donor is glutamate 126. Threonine 167 serves as a coordination point for (2E)-4-hydroxy-3-methylbut-2-enyl diphosphate. Position 197 (cysteine 197) interacts with [4Fe-4S] cluster. (2E)-4-hydroxy-3-methylbut-2-enyl diphosphate is bound by residues serine 225, serine 226, asparagine 227, and serine 269. Dimethylallyl diphosphate is bound by residues serine 225, serine 226, asparagine 227, and serine 269. Residues serine 225, serine 226, asparagine 227, and serine 269 each coordinate isopentenyl diphosphate.

The protein belongs to the IspH family. Homodimer. [4Fe-4S] cluster is required as a cofactor.

It carries out the reaction isopentenyl diphosphate + 2 oxidized [2Fe-2S]-[ferredoxin] + H2O = (2E)-4-hydroxy-3-methylbut-2-enyl diphosphate + 2 reduced [2Fe-2S]-[ferredoxin] + 2 H(+). The catalysed reaction is dimethylallyl diphosphate + 2 oxidized [2Fe-2S]-[ferredoxin] + H2O = (2E)-4-hydroxy-3-methylbut-2-enyl diphosphate + 2 reduced [2Fe-2S]-[ferredoxin] + 2 H(+). It participates in isoprenoid biosynthesis; dimethylallyl diphosphate biosynthesis; dimethylallyl diphosphate from (2E)-4-hydroxy-3-methylbutenyl diphosphate: step 1/1. Its pathway is isoprenoid biosynthesis; isopentenyl diphosphate biosynthesis via DXP pathway; isopentenyl diphosphate from 1-deoxy-D-xylulose 5-phosphate: step 6/6. Functionally, catalyzes the conversion of 1-hydroxy-2-methyl-2-(E)-butenyl 4-diphosphate (HMBPP) into a mixture of isopentenyl diphosphate (IPP) and dimethylallyl diphosphate (DMAPP). Acts in the terminal step of the DOXP/MEP pathway for isoprenoid precursor biosynthesis. The sequence is that of 4-hydroxy-3-methylbut-2-enyl diphosphate reductase from Cronobacter sakazakii (strain ATCC BAA-894) (Enterobacter sakazakii).